The following is a 429-amino-acid chain: Glutamate-1-semialdehyde 2,1-aminomutase 2 (429 aa).

At K268 the chain carries N6-(pyridoxal phosphate)lysine.

It belongs to the class-III pyridoxal-phosphate-dependent aminotransferase family. HemL subfamily. Homodimer. Requires pyridoxal 5'-phosphate as cofactor.

It is found in the cytoplasm. It catalyses the reaction (S)-4-amino-5-oxopentanoate = 5-aminolevulinate. It participates in porphyrin-containing compound metabolism; protoporphyrin-IX biosynthesis; 5-aminolevulinate from L-glutamyl-tRNA(Glu): step 2/2. This is Glutamate-1-semialdehyde 2,1-aminomutase 2 from Staphylococcus epidermidis (strain ATCC 35984 / DSM 28319 / BCRC 17069 / CCUG 31568 / BM 3577 / RP62A).